Consider the following 205-residue polypeptide: Phosphoserine phosphatase ThrH (205 aa).

D7 (nucleophile) is an active-site residue. Positions 7 and 9 each coordinate Mg(2+). The Proton donor role is filled by E9. Residues E15, R46, 90–91 (SD), and K133 each bind substrate. D152 provides a ligand contact to Mg(2+). N155 provides a ligand contact to substrate.

This sequence belongs to the thrH family. Requires Mg(2+) as cofactor.

It catalyses the reaction O-phospho-L-serine + H2O = L-serine + phosphate. The catalysed reaction is O-phospho-D-serine + H2O = D-serine + phosphate. It functions in the pathway amino-acid biosynthesis; L-serine biosynthesis; L-serine from 3-phospho-D-glycerate: step 3/3. Its function is as follows. Phosphoserine phosphatase that mediates dephosphorylation of phosphoserine in the serine biosynthesis pathway. Also able to dephosphorylate other substrates such as phospho-L(or D)-threonine, with lower activity. Shows phosphoserine:homoserine phosphotransferase activity by transferring the phosphoryl group to homoserine using phosphoserine as the phosphoryl group donor. This Pseudomonas aeruginosa (strain ATCC 15692 / DSM 22644 / CIP 104116 / JCM 14847 / LMG 12228 / 1C / PRS 101 / PAO1) protein is Phosphoserine phosphatase ThrH (thrH).